The following is a 361-amino-acid chain: Cyclic AMP receptor-like protein C (361 aa).

The Extracellular segment spans residues 1-18 (MGIEESQICNPSDREFLS). The chain crosses the membrane as a helical span at residues 19–39 (VDILNIVTSSLSLMGSALTII). The Cytoplasmic segment spans residues 40-113 (SYIWKKVRRH…HGTYKQPTSK (74 aa)). The helical transmembrane segment at 114–134 (LPLLIFMLSIADFFTSFFIII) threads the bilayer. The Extracellular portion of the chain corresponds to 135–166 (SQSYLINNSKSYSTPYSPDLKIHFSPCIILRA). Residues 167-187 (IIQFFFLSTFFWTTCISYYLF) form a helical membrane-spanning segment. Residues 188–197 (HQLSSPGEEK) lie on the Cytoplasmic side of the membrane. The chain crosses the membrane as a helical span at residues 198 to 218 (YLLAIFNVVSWGIPFAISMVI). The Extracellular segment spans residues 219 to 238 (TMTNSIVVNSDGWCEVAKPM). Residues 239-259 (ELSLWFLPLFLCLLVCSIYYF) traverse the membrane as a helical segment. Topologically, residues 260-292 (RLRRLFRSKFEYRLQINDRLKQLDSTISRRLTL) are cytoplasmic. A helical membrane pass occupies residues 293-313 (YIVVFVICWLPDVIQHFISFF). Residues 314 to 318 (SKCTF) lie on the Extracellular side of the membrane. Residues 319-339 (FPLLILQNILTPSQGFWNFWI) form a helical membrane-spanning segment. Over 340 to 361 (YSYTNKIARFTPSNDENKRLLQ) the chain is Cytoplasmic.

The protein belongs to the G-protein coupled receptor 5 family.

The protein resides in the membrane. Its function is as follows. Receptor for cAMP. The protein is Cyclic AMP receptor-like protein C (crlC) of Dictyostelium discoideum (Social amoeba).